We begin with the raw amino-acid sequence, 75 residues long: Endogenous retrovirus group K member 7 Np9 protein (75 aa).

The disordered stretch occupies residues P24–K43. Basic and acidic residues predominate over residues T32 to K43.

The protein resides in the nucleus. Its function is as follows. May possess a function in tumorigenesis. This is Endogenous retrovirus group K member 7 Np9 protein (ERVK-7) from Homo sapiens (Human).